The following is a 453-amino-acid chain: Phosphoglucosamine mutase (453 aa).

The active-site Phosphoserine intermediate is Ser-108. Mg(2+)-binding residues include Ser-108, Asp-247, Asp-249, and Asp-251. Phosphoserine is present on Ser-108.

Belongs to the phosphohexose mutase family. The cofactor is Mg(2+). Activated by phosphorylation.

The catalysed reaction is alpha-D-glucosamine 1-phosphate = D-glucosamine 6-phosphate. Functionally, catalyzes the conversion of glucosamine-6-phosphate to glucosamine-1-phosphate. The protein is Phosphoglucosamine mutase of Methylobacillus flagellatus (strain ATCC 51484 / DSM 6875 / VKM B-1610 / KT).